The chain runs to 441 residues: GTPase Der (441 aa).

2 consecutive EngA-type G domains span residues 4–169 (PIVA…PEGS) and 178–353 (PKVA…DAQT). GTP-binding positions include 10–17 (GRPNVGKS), 57–61 (DTGGI), 120–123 (NKVD), 184–191 (GKPNVGKS), 231–235 (DTAGL), and 296–299 (NKWD). The region spanning 354–438 (MRIPTGVLNE…SIRFINRERK (85 aa)) is the KH-like domain.

This sequence belongs to the TRAFAC class TrmE-Era-EngA-EngB-Septin-like GTPase superfamily. EngA (Der) GTPase family. In terms of assembly, associates with the 50S ribosomal subunit.

Its function is as follows. GTPase that plays an essential role in the late steps of ribosome biogenesis. This Lachnospira eligens (strain ATCC 27750 / DSM 3376 / VPI C15-48 / C15-B4) (Eubacterium eligens) protein is GTPase Der.